A 376-amino-acid polypeptide reads, in one-letter code: WD repeat-containing protein wdr-5.1 (376 aa).

Residues 1–24 are compositionally biased toward polar residues; that stretch reads MDTSENAASAAEQQPTQQIDQLTV. The interval 1 to 70 is disordered; that stretch reads MDTSENAASA…TPNPNAAGAS (70 aa). Positions 25–53 are enriched in low complexity; it reads PNAPDGGSSAPAPSTSPNSISPSNPTGTP. WD repeat units lie at residues 85–115, 127–157, 169–199, 211–241, 254–284, 296–329, and 341–373; these read GHTK…KIWN, GHKL…KIFE, GHNN…RIWD, AHSD…RIWD, DENP…KLWD, GHEN…YIWN, and GHTQ…HIWR.

It belongs to the WD repeat WDR5/wds family. As to quaternary structure, component of the SET2 complex (also known as the SET1/COMPASS complex), which contains at least set-2, swd-2.1, cfp-1, rbbp-5, wdr-5.1, dpy-30 and ash-2. Within the complex, interacts with cfp-1, ash-2, dpy-30 and hda-1. Interacts with histone H3 both unmethylated and methylated at 'Lys-4'. Interacts with jmjd-3.1, ceh-6, sox-2, sem-4 and egl-27. Interacts with set-2. As to expression, enriched in the germline. Detected in all nuclei of the embryo. In larvae, expression is detected in the nuclei of seam cells, somatic gonad precursor cells Z1 and Z4, vulval precursor cells, distal tip cells, hypodermal cells, intestinal and muscle cells. Also detected in the neurons from the ventral nerve cord, head and tail region. Expressed in the head and tail region, intestinal cells, muscle cells, cells of the vulva, spermatheca and sheath cells in adults.

The protein resides in the nucleus. In terms of biological role, contributes to histone modification. May position the N-terminus of histone H3 for efficient trimethylation at 'Lys-4'. Required for di- and trimethylation, particularly for the trimethylation at 'Lys-4' of histone H3. Not required for demethylation of histone H3 'Lys-27'. H3 'Lys-4' methylation represents a specific tag for epigenetic transcriptional activation, germline establishment, maintenance and function. Implicated in the epigenetic inheritance of lifespan over several generations. Acts in the germline to limit the longevity of the soma, probably by regulating a lipid metabolism pathway that signals from the germline to the intestine, thereby preventing accumulation of mono-unsaturated fatty acids. Required for RNA interference with probable antagonistic role against hpl-2 function. Plays a role in vulval cell fate specification by acting in the synthetic multivulva pathway independent of set-2. Sex determining protein required in the germline to promote the spermatogenesis to oogenesis switch during the late larval stages of development. Acts with the sex determining factor tra-1, and redundantly with wdr-5.2, to regulate fog-3 expression, which in turn determines germ cell fate. Cooperates with jmjd-3.1, egl-27 and unc-3 to ensure robust transdifferentiation of the Y rectal cell to the PDA motor neuron during larval development. In Caenorhabditis elegans, this protein is WD repeat-containing protein wdr-5.1 (wdr-5.1).